The chain runs to 239 residues: Proteasome subunit beta type-6 (239 aa).

Ala2 is modified (N-acetylalanine). Residues 2 to 34 constitute a propeptide, removed in mature form; it reads AATLVAARGTRPAPAWGPEAIAPDWENREVSTG. Thr35 (nucleophile) is an active-site residue. A Phosphothreonine modification is found at Thr69.

Belongs to the peptidase T1B family. As to quaternary structure, the 26S proteasome consists of a 20S proteasome core and two 19S regulatory subunits. The 20S proteasome core is a barrel-shaped complex made of 28 subunits that are arranged in four stacked rings. The two outer rings are each formed by seven alpha subunits, and the two inner rings are formed by seven beta subunits. The proteolytic activity is exerted by three beta-subunits PSMB5, PSMB6 and PSMB7.

It is found in the cytoplasm. It localises to the nucleus. It carries out the reaction Cleavage of peptide bonds with very broad specificity.. Its function is as follows. Component of the 20S core proteasome complex involved in the proteolytic degradation of most intracellular proteins. This complex plays numerous essential roles within the cell by associating with different regulatory particles. Associated with two 19S regulatory particles, forms the 26S proteasome and thus participates in the ATP-dependent degradation of ubiquitinated proteins. The 26S proteasome plays a key role in the maintenance of protein homeostasis by removing misfolded or damaged proteins that could impair cellular functions, and by removing proteins whose functions are no longer required. Associated with the PA200 or PA28, the 20S proteasome mediates ubiquitin-independent protein degradation. This type of proteolysis is required in several pathways including spermatogenesis (20S-PA200 complex) or generation of a subset of MHC class I-presented antigenic peptides (20S-PA28 complex). Within the 20S core complex, PSMB6 displays a peptidylglutamyl-hydrolyzing activity also termed postacidic or caspase-like activity, meaning that the peptides bond hydrolysis occurs directly after acidic residues. This is Proteasome subunit beta type-6 (PSMB6) from Bos taurus (Bovine).